Reading from the N-terminus, the 134-residue chain is Pre-histone-like nucleoprotein (134 aa).

Positions 2–23 are excised as a propeptide; that stretch reads AILISPTNNTGWGLGTHKLFGG. A disordered region spans residues 40-62; it reads RASWGSKGRRRRQGRARGAPLDP. Residues 125-134 carry the Nuclear localization signal motif; the sequence is KRKRRVRFRQ.

This sequence belongs to the adenoviridae histone-like nucleoprotein family. As to quaternary structure, interacts with the core-capsid bridging protein; this interaction bridges the virus core to the capsid. Interacts with host NPM1; this interaction might play a role in placing the pre-histone-like nucleoprotein on the viral DNA or regulating viral gene expression. Interacts with host HMGB1; this interaction inhibits host immune response. Cleaved near the N-terminus by the viral protease during virion maturation to form the mature protein.

It localises to the virion. Its subcellular location is the host nucleus. The protein resides in the host nucleolus. Its function is as follows. Plays a role in the inhibition of host immune response within the nucleus. Interacts with cellular nucleosomes and immobilizes the host immune danger signal HMGB1 on chromatin. In turn, prevents HMGB1 release out of the cell and thus decreases inflammation. Also plays a role in the wrapping and condensation of the viral DNA. May also promote viral genome import into the nucleus. This Canis lupus familiaris (Dog) protein is Pre-histone-like nucleoprotein.